The primary structure comprises 378 residues: Phospho-N-acetylmuramoyl-pentapeptide-transferase (378 aa).

10 consecutive transmembrane segments (helical) span residues T27–N47, T74–L94, Y96–D116, L135–Y155, W184–Y204, G216–G236, L256–H276, I280–L300, I305–V325, and K355–L375.

Belongs to the glycosyltransferase 4 family. MraY subfamily. Mg(2+) is required as a cofactor.

It is found in the cell inner membrane. It catalyses the reaction UDP-N-acetyl-alpha-D-muramoyl-L-alanyl-gamma-D-glutamyl-meso-2,6-diaminopimeloyl-D-alanyl-D-alanine + di-trans,octa-cis-undecaprenyl phosphate = di-trans,octa-cis-undecaprenyl diphospho-N-acetyl-alpha-D-muramoyl-L-alanyl-D-glutamyl-meso-2,6-diaminopimeloyl-D-alanyl-D-alanine + UMP. The protein operates within cell wall biogenesis; peptidoglycan biosynthesis. In terms of biological role, catalyzes the initial step of the lipid cycle reactions in the biosynthesis of the cell wall peptidoglycan: transfers peptidoglycan precursor phospho-MurNAc-pentapeptide from UDP-MurNAc-pentapeptide onto the lipid carrier undecaprenyl phosphate, yielding undecaprenyl-pyrophosphoryl-MurNAc-pentapeptide, known as lipid I. The chain is Phospho-N-acetylmuramoyl-pentapeptide-transferase from Solibacter usitatus (strain Ellin6076).